The following is a 165-amino-acid chain: Probable cell wall protein PGA15 (165 aa).

Positions 1-16 (MKFIIILFTLISIVTA) are cleaved as a signal peptide. The GPI-anchor amidated serine moiety is linked to residue Ser-143. Positions 144-165 (GAANYLTSFSIGTFFVFVLGLI) are cleaved as a propeptide — removed in mature form.

This sequence belongs to the IHD1 family. The GPI-anchor is attached to the protein in the endoplasmic reticulum and serves to target the protein to the cell surface. There, the glucosamine-inositol phospholipid moiety is cleaved off and the GPI-modified mannoprotein is covalently attached via its lipidless GPI glycan remnant to the 1,6-beta-glucan of the outer cell wall layer.

The protein localises to the secreted. It is found in the cell wall. The protein resides in the membrane. In terms of biological role, probable GPI-anchored cell wall protein that may be involved in cell wall organization, hyphal growth, as well as in virulence. The polypeptide is Probable cell wall protein PGA15 (PGA15) (Candida albicans (strain SC5314 / ATCC MYA-2876) (Yeast)).